The chain runs to 101 residues: Acylphosphatase-1 (101 aa).

An N-acetylserine modification is found at Ser-2. N-acetylalanine is present on Ser-2. An Acylphosphatase-like domain is found at 11 to 101; sequence SVDYEIFGKV…LDYTDFQIVK (91 aa). Residues Arg-26 and Asn-44 contribute to the active site.

It belongs to the acylphosphatase family. As to expression, organ-common type isozyme is found in many different tissues.

The catalysed reaction is an acyl phosphate + H2O = a carboxylate + phosphate + H(+). The chain is Acylphosphatase-1 (ACYP1) from Bos taurus (Bovine).